Reading from the N-terminus, the 170-residue chain is Myosin regulatory light chain 2, skeletal muscle isoform (170 aa).

A N,N,N-trimethylalanine modification is found at Ala-2. Phosphoserine is present on residues Ser-16 and Ser-17. Thr-26 and Thr-36 each carry phosphothreonine. The EF-hand 1 domain maps to 26 to 61; that stretch reads TQIQEFKEAFTVIDQNRDGIIDKEDLRDTFAAMGRL. Asp-39, Asn-41, Asp-43, and Asp-50 together coordinate Ca(2+). Residue Ser-76 is modified to Phosphoserine. 2 EF-hand domains span residues 96-131 and 132-167; these read DPEDVITGAFKVLDPEGKGTIKKKFLEELLTTQCDR and FSQEEIKNMWAAFPPDVGGNVDYKNICYVITHGDAK. Thr-102 bears the Phosphothreonine mark.

Myosin is a hexamer of 2 heavy chains and 4 light chains.

In terms of biological role, plays a role in muscle contraction. In Bos taurus (Bovine), this protein is Myosin regulatory light chain 2, skeletal muscle isoform.